The chain runs to 337 residues: Phenylalanine--tRNA ligase alpha subunit (337 aa).

Residue E252 participates in Mg(2+) binding.

It belongs to the class-II aminoacyl-tRNA synthetase family. Phe-tRNA synthetase alpha subunit type 1 subfamily. In terms of assembly, tetramer of two alpha and two beta subunits. The cofactor is Mg(2+).

It localises to the cytoplasm. The enzyme catalyses tRNA(Phe) + L-phenylalanine + ATP = L-phenylalanyl-tRNA(Phe) + AMP + diphosphate + H(+). This chain is Phenylalanine--tRNA ligase alpha subunit, found in Francisella philomiragia subsp. philomiragia (strain ATCC 25017 / CCUG 19701 / FSC 153 / O#319-036).